A 641-amino-acid chain; its full sequence is MGKIIGIDLGTTNSCVAIMDGGKARVIENSEGDRTTPSIVAYTKDGEVLVGASAKRQAVTNPKNTFYAVKRLIGRKFTDAEVQKDIAHVPYSILAHDNGDAWVATSDAKKMAPQEISAKVLEKMKKTAEDFLGEKVTEAVITVPAYFNDSQRQATKDAGRIAGLDVKRIINEPTAAALAYGLDKGDNKDRKIVVYDLGGGTFDVSVIEIANVDGEKQFEVLATNGDTFLGGEDFDNRVIEYLVEEFNKDQGIDLRKDPLALQRLKDAAERAKIELSSAQQTEVNLPYVTADASGPKHLNIKLTRAKLESLVEELIRKSIEPCRVALNDAGLRSSDISEVILVGGQTRMPKVQQAVTEFFGKEPRKDVNPDEAVALGAAIQGGVLGGDVKDVLLLDVTPLSLGIETMGGVFTKIIEKNTTIPTKASQVFSTAEDNQSAVTVHVLQGEREQARFNKSLAKFDLSGIEPAPRGLPQVEVSFDIDANGILHVSAKDKKTNKEQKVEIKAGSGLSEEEIARMVADAEANREEDKKFQELVQARNQADALIHGTRSAITEHGSKVGGDVIGKVEAALADLETAMKGDDKAQIEAKSKVLEEAGQSLFAAASAEQGGAAPGADAGNAGKAQDDVVDAEFTEVKDDKKS.

T201 is modified (phosphothreonine; by autocatalysis). Positions 604-622 are enriched in low complexity; the sequence is ASAEQGGAAPGADAGNAGK. The tract at residues 604-625 is disordered; that stretch reads ASAEQGGAAPGADAGNAGKAQD.

This sequence belongs to the heat shock protein 70 family.

Functionally, acts as a chaperone. The polypeptide is Chaperone protein DnaK (Stenotrophomonas maltophilia (strain R551-3)).